The following is a 246-amino-acid chain: Small ribosomal subunit protein uS2 (246 aa).

The disordered stretch occupies residues 224–246 (AKQGEEEAEAAEETAPETETTTA). Positions 229–239 (EEAEAAEETAP) are enriched in acidic residues.

Belongs to the universal ribosomal protein uS2 family.

The sequence is that of Small ribosomal subunit protein uS2 from Bacillus velezensis (strain DSM 23117 / BGSC 10A6 / LMG 26770 / FZB42) (Bacillus amyloliquefaciens subsp. plantarum).